Consider the following 471-residue polypeptide: tRNA-2-methylthio-N(6)-dimethylallyladenosine synthase (471 aa).

The 118-residue stretch at 29–146 folds into the MTTase N-terminal domain; sequence KKFHIKTYGC…LPELIAKVNR (118 aa). Residues cysteine 38, cysteine 74, cysteine 109, cysteine 187, cysteine 191, and cysteine 194 each contribute to the [4Fe-4S] cluster site. The Radical SAM core domain maps to 173–405; sequence RVPQSSAFLS…QQLLKEKQLE (233 aa). The TRAM domain occupies 408 to 467; the sequence is KKMIGKTVTVLFDKKHPDKISGRTEYMQQVFSDDSNLLDKIVTMRVEDASTFTLKCTAED.

Belongs to the methylthiotransferase family. MiaB subfamily. In terms of assembly, monomer. The cofactor is [4Fe-4S] cluster.

It is found in the cytoplasm. It catalyses the reaction N(6)-dimethylallyladenosine(37) in tRNA + (sulfur carrier)-SH + AH2 + 2 S-adenosyl-L-methionine = 2-methylsulfanyl-N(6)-dimethylallyladenosine(37) in tRNA + (sulfur carrier)-H + 5'-deoxyadenosine + L-methionine + A + S-adenosyl-L-homocysteine + 2 H(+). Functionally, catalyzes the methylthiolation of N6-(dimethylallyl)adenosine (i(6)A), leading to the formation of 2-methylthio-N6-(dimethylallyl)adenosine (ms(2)i(6)A) at position 37 in tRNAs that read codons beginning with uridine. This chain is tRNA-2-methylthio-N(6)-dimethylallyladenosine synthase, found in Neorickettsia sennetsu (strain ATCC VR-367 / Miyayama) (Ehrlichia sennetsu).